The primary structure comprises 505 residues: ATP synthase subunit alpha (505 aa).

An ATP-binding site is contributed by 169-176; the sequence is GDRQIGKT.

This sequence belongs to the ATPase alpha/beta chains family. In terms of assembly, F-type ATPases have 2 components, CF(1) - the catalytic core - and CF(0) - the membrane proton channel. CF(1) has five subunits: alpha(3), beta(3), gamma(1), delta(1), epsilon(1). CF(0) has three main subunits: a(1), b(2) and c(9-12). The alpha and beta chains form an alternating ring which encloses part of the gamma chain. CF(1) is attached to CF(0) by a central stalk formed by the gamma and epsilon chains, while a peripheral stalk is formed by the delta and b chains.

The protein localises to the cell inner membrane. It carries out the reaction ATP + H2O + 4 H(+)(in) = ADP + phosphate + 5 H(+)(out). Its function is as follows. Produces ATP from ADP in the presence of a proton gradient across the membrane. The alpha chain is a regulatory subunit. This chain is ATP synthase subunit alpha, found in Desulfatibacillum aliphaticivorans.